The following is a 932-amino-acid chain: MTEFLPFVARHIGPRHEDERAMLAALGLPSMETLITQAVPASIRLNRALNLPAALSEADALAELGTIMGRNVVKKSFIGAGYHGVHTPPVIQRNLFENPAWYTAYTPYQSEISQGRLELLFHFQTLVAELTGLPVACASLLDEATAVAEAIGVACRHHRDKRSRILLAGELHPQTVDVVNTRAEPLGWEIATGSDVDDNTAAIVVPWPDTRGVYGDFAKVIADAKAKGALVIAVADPLALTIMEAPARWGADMAVGSMQRYGVPMGFGGPHAAYLAVSEALTRIIPGRIVGQSVDAHGRAAYRLALQTREQHIRRDKATSNICTAQALLANMAAAFAIWHGPAGLQAIATRVAALAARFAAALKAAGVEIAGESLFDTVTAKVPGKAAAIAAEADKGGRLIRIIDADTVGVTFDETSTEEDLTALASLFGAKPVGGDTVLVPGKERGEGFLTQEVFHSHRSETEMMRFLRRLADKDLALDRAMIPLGSCTMKLNAAAEMMPVSWNTVANLHPFAPAEQVQGYAKMTSDLEAWLCEITGFAGVSLQPNAGSQGEYAGLMAIRHYHQAWGQGHRNICLIPSSAHGTNPASASMAGMSVVVVNCRPDGDIDIDDLKAKAEKHRDNLAAFMITYPSTYGVFEEGIKAFCEIVHDNGGQVYFDGANLNALVGLARPADIGADVCHMNLHKTFCIPHGGGGPGVGPIGVAKHLVPYLPGHVEAGSEHAVAAAQFGSASILVITWMYIRMMGGAGLKKATEAAILNANYIAHRLKGVYPILYTGAHDRVAHECIVDTRVLKDSAGITVEDVAKRLIDYGFHAPTMSWPVAGTLMIEPTESEPKLEIDRLCDAMIAIAGEAKKVADGVWPADDNPLANAPHTASDTLATEWKHPYTREEAVFPGGAFDPTAKYWPPVSRVDNVGGDRNLICSCPPVAAYG.

Residue Lys-685 is modified to N6-(pyridoxal phosphate)lysine.

The protein belongs to the GcvP family. In terms of assembly, the glycine cleavage system is composed of four proteins: P, T, L and H. The cofactor is pyridoxal 5'-phosphate.

The catalysed reaction is N(6)-[(R)-lipoyl]-L-lysyl-[glycine-cleavage complex H protein] + glycine + H(+) = N(6)-[(R)-S(8)-aminomethyldihydrolipoyl]-L-lysyl-[glycine-cleavage complex H protein] + CO2. Functionally, the glycine cleavage system catalyzes the degradation of glycine. The P protein binds the alpha-amino group of glycine through its pyridoxal phosphate cofactor; CO(2) is released and the remaining methylamine moiety is then transferred to the lipoamide cofactor of the H protein. The protein is Glycine dehydrogenase (decarboxylating) of Brucella suis biovar 1 (strain 1330).